Reading from the N-terminus, the 280-residue chain is Formyltetrahydrofolate deformylase (280 aa).

The ACT domain maps to 8–86 (VLRTICPDQK…RELNPAGRRR (79 aa)). Residue aspartate 225 is part of the active site.

This sequence belongs to the PurU family. In terms of assembly, homohexamer.

The enzyme catalyses (6R)-10-formyltetrahydrofolate + H2O = (6S)-5,6,7,8-tetrahydrofolate + formate + H(+). It functions in the pathway purine metabolism; IMP biosynthesis via de novo pathway; formate from 10-formyl-5,6,7,8-tetrahydrofolate: step 1/1. Its activity is regulated as follows. Activated by methionine, inhibited by glycine. In terms of biological role, catalyzes the hydrolysis of 10-formyltetrahydrofolate (formyl-FH4) to formate and tetrahydrofolate (FH4). Provides the major source of formate for the PurT-dependent synthesis of 5'-phosphoribosyl-N-formylglycinamide (FGAR) during aerobic growth. Has a role in regulating the one-carbon pool. The sequence is that of Formyltetrahydrofolate deformylase from Escherichia coli (strain K12).